Reading from the N-terminus, the 260-residue chain is Ava biosynthesis cluster protein M (260 aa).

The N-terminal stretch at 1–15 (MKVLVLGLCRTGTSS) is a signal peptide.

Belongs to the cytochrome P450 family.

The protein operates within secondary metabolite biosynthesis. Its function is as follows. Part of the cluster that mediates the biosynthesis of a highly modified cyclo-arginine-tryptophan dipeptide (cRW). The first step of the pathway is perfornmed by the arginine-containing cyclodipeptide synthase (RCPDS) avaA that acts as the scaffold-generating enzyme and is responsible for formation of the cyclo-Arg-Trp (cRW) diketopiperazine. AvaB then acts as a multifunctional flavoenzyme that is responsible for generating the cyclo-Arg-formylkynurenine DKP, which can be deformylated by avaC. AvaB then further catalyzes an additional N-oxidation followed by cyclization and dehydration. The next step is an N-acetylation of the guanidine group catalyzed by the arginine N-acetyltransferase avaD. The roles of the additional enzymes identified within the ava cluster still have to be determined. This Aspergillus versicolor protein is Ava biosynthesis cluster protein M.